We begin with the raw amino-acid sequence, 179 residues long: Large ribosomal subunit protein uL6 (179 aa).

Belongs to the universal ribosomal protein uL6 family. In terms of assembly, part of the 50S ribosomal subunit.

In terms of biological role, this protein binds to the 23S rRNA, and is important in its secondary structure. It is located near the subunit interface in the base of the L7/L12 stalk, and near the tRNA binding site of the peptidyltransferase center. In Mycobacterium avium (strain 104), this protein is Large ribosomal subunit protein uL6.